A 199-amino-acid polypeptide reads, in one-letter code: Adenylyl-sulfate kinase (199 aa).

The interval 1-21 (MSQSSNITWHDSEVTKSDRQQ) is disordered. Basic and acidic residues predominate over residues 10–19 (HDSEVTKSDR). 34–41 (GLSGSGKS) is a binding site for ATP. Serine 108 acts as the Phosphoserine intermediate in catalysis.

Belongs to the APS kinase family.

The enzyme catalyses adenosine 5'-phosphosulfate + ATP = 3'-phosphoadenylyl sulfate + ADP + H(+). It functions in the pathway sulfur metabolism; hydrogen sulfide biosynthesis; sulfite from sulfate: step 2/3. Its function is as follows. Catalyzes the synthesis of activated sulfate. This Staphylococcus haemolyticus (strain JCSC1435) protein is Adenylyl-sulfate kinase.